The chain runs to 692 residues: Elongation factor G (692 aa).

In terms of domain architecture, tr-type G spans 8 to 282 (KDYRNIGIMA…AVVDYLPSPL (275 aa)). GTP-binding positions include 17–24 (AHIDAGKT), 81–85 (DTPGH), and 135–138 (NKMD).

The protein belongs to the TRAFAC class translation factor GTPase superfamily. Classic translation factor GTPase family. EF-G/EF-2 subfamily.

Its subcellular location is the cytoplasm. Catalyzes the GTP-dependent ribosomal translocation step during translation elongation. During this step, the ribosome changes from the pre-translocational (PRE) to the post-translocational (POST) state as the newly formed A-site-bound peptidyl-tRNA and P-site-bound deacylated tRNA move to the P and E sites, respectively. Catalyzes the coordinated movement of the two tRNA molecules, the mRNA and conformational changes in the ribosome. This is Elongation factor G (fusA) from Mycoplasmopsis pulmonis (strain UAB CTIP) (Mycoplasma pulmonis).